The primary structure comprises 309 residues: Ecotin-like protein 3 (309 aa).

The disordered stretch occupies residues 140-309 (QQELEAPAVS…KSGRDSRRNS (170 aa)). A compositionally biased stretch (basic and acidic residues) spans 156 to 167 (VRERQNNPEGHA). The segment covering 168 to 180 (HPVVVHSVESPEV) has biased composition (low complexity). Over residues 181-190 (SGHKDGDQPM) the composition is skewed to basic and acidic residues. The span at 196 to 205 (LKQSCSNSSR) shows a compositional bias: low complexity. Residues 209-221 (HSASGSSPKNTPL) show a composition bias toward polar residues. Residues 261–279 (SDSTSSRKDDQDSGYEKKV) are compositionally biased toward basic and acidic residues. Residues 290–299 (SSPKRSASPK) show a composition bias toward low complexity.

This sequence belongs to the protease inhibitor I11 (ecotin) family.

In Leishmania braziliensis, this protein is Ecotin-like protein 3.